Reading from the N-terminus, the 79-residue chain is Small ribosomal subunit protein bS18 (79 aa).

The protein belongs to the bacterial ribosomal protein bS18 family. As to quaternary structure, part of the 30S ribosomal subunit. Forms a tight heterodimer with protein bS6.

Functionally, binds as a heterodimer with protein bS6 to the central domain of the 16S rRNA, where it helps stabilize the platform of the 30S subunit. This is Small ribosomal subunit protein bS18 from Bradyrhizobium diazoefficiens (strain JCM 10833 / BCRC 13528 / IAM 13628 / NBRC 14792 / USDA 110).